We begin with the raw amino-acid sequence, 557 residues long: MSSVNLSSFIDMLRLGCNNIAKNYEYINQLNVFPVPDGDTGTNMKVTITEAIKKLENEKSHIKSFSELGKNFTRDLLLFSRGNSGVIFSQIMKGFFSNIIVNKTSNNSELSIEDVANAFIVAQEVAYKNVSKPVEGTMLTVARLISNEFKSQKNRPKTLEKLFEQAVKVAWQAVKKTPQMLPVLKASGVVDSGAYGFACFLEGMLSYYGGESNLDDNTLSTIEIKFNKFKEQHANEDEFGYCTEYVLRLGLKINQTVEKQKFHQKKFESKVNRIANSVVIASDKDNGFVKVHAHTLKPHLLLEMGLNYGEFEFVKIDNMNLQVNNKNNSPTKRVLKPAIVATVPTEAFAERIREDHDINAILCTDDTGAPSVFSLLEAVKLTNSSNVIFLLHDKNYFLSANETIKQLKHQKINADYVITANPVESIAALTVFNSDLSIHTNVKAMKRFIKEFASATITQASKSYKENKVMVNKNDFIAVTNKSIIASESQLTDCFFKTIDILSKKVKKPEFLLAYYGKDITEQDAKKMQALVEKKYKLFCEFSPGEQKVFSYIIGIQ.

A DhaL domain is found at 7-206; that stretch reads SSFIDMLRLG…FACFLEGMLS (200 aa).

This is an uncharacterized protein from Mycoplasma genitalium (strain ATCC 33530 / DSM 19775 / NCTC 10195 / G37) (Mycoplasmoides genitalium).